The primary structure comprises 467 residues: Dimethylamine methyltransferase MtbB3 (467 aa).

Pyrrolysine 356 is a non-standard amino acid (pyrrolysine).

It belongs to the dimethylamine methyltransferase family.

It carries out the reaction Co(I)-[dimethylamine-specific corrinoid protein] + dimethylamine + H(+) = methyl-Co(III)-[dimethylamine-specific corrinoid protein] + methylamine. It functions in the pathway one-carbon metabolism; methanogenesis from dimethylamine. Catalyzes the transfer of a methyl group from dimethylamine to the corrinoid cofactor of MtbC. This is Dimethylamine methyltransferase MtbB3 (mtbB3) from Methanosarcina mazei (strain ATCC BAA-159 / DSM 3647 / Goe1 / Go1 / JCM 11833 / OCM 88) (Methanosarcina frisia).